We begin with the raw amino-acid sequence, 351 residues long: Methylthioribose-1-phosphate isomerase (351 aa).

Substrate is bound by residues 51-53, R94, and Q199; that span reads RGA. D240 serves as the catalytic Proton donor. 250–251 provides a ligand contact to substrate; sequence NK.

The protein belongs to the EIF-2B alpha/beta/delta subunits family. MtnA subfamily. Homodimer.

It carries out the reaction 5-(methylsulfanyl)-alpha-D-ribose 1-phosphate = 5-(methylsulfanyl)-D-ribulose 1-phosphate. Its pathway is amino-acid biosynthesis; L-methionine biosynthesis via salvage pathway; L-methionine from S-methyl-5-thio-alpha-D-ribose 1-phosphate: step 1/6. Catalyzes the interconversion of methylthioribose-1-phosphate (MTR-1-P) into methylthioribulose-1-phosphate (MTRu-1-P). This Bacillus anthracis protein is Methylthioribose-1-phosphate isomerase.